The chain runs to 878 residues: Phosphoenolpyruvate carboxylase (878 aa).

Active-site residues include H140 and K545.

The protein belongs to the PEPCase type 1 family. Requires Mg(2+) as cofactor.

The catalysed reaction is oxaloacetate + phosphate = phosphoenolpyruvate + hydrogencarbonate. In terms of biological role, forms oxaloacetate, a four-carbon dicarboxylic acid source for the tricarboxylic acid cycle. The protein is Phosphoenolpyruvate carboxylase of Pseudomonas paraeruginosa (strain DSM 24068 / PA7) (Pseudomonas aeruginosa (strain PA7)).